Consider the following 276-residue polypeptide: Mitochondrial outer membrane protein porin 6 (276 aa).

The protein belongs to the eukaryotic mitochondrial porin (TC 1.B.8.1) family.

The protein localises to the mitochondrion outer membrane. Its function is as follows. Forms a channel through the mitochondrial outer membrane that allows diffusion of small hydrophilic molecules. The channel adopts an open conformation at low or zero membrane potential and a closed conformation at potentials above 30-40 mV. The open state has a weak anion selectivity whereas the closed state is cation-selective. The polypeptide is Mitochondrial outer membrane protein porin 6 (VDAC6) (Oryza sativa subsp. japonica (Rice)).